A 323-amino-acid chain; its full sequence is Thioredoxin reductase (323 aa).

42 to 49 (YRAEADGA) provides a ligand contact to FAD. Cysteines 143 and 146 form a disulfide. 286–295 (DVLCNEVKQA) contacts FAD.

The protein belongs to the class-II pyridine nucleotide-disulfide oxidoreductase family. Homodimer. FAD is required as a cofactor.

It localises to the cytoplasm. It carries out the reaction [thioredoxin]-dithiol + NADP(+) = [thioredoxin]-disulfide + NADPH + H(+). This Aquifex aeolicus (strain VF5) protein is Thioredoxin reductase (trxB).